A 599-amino-acid chain; its full sequence is Elongation factor 4 (599 aa).

One can recognise a tr-type G domain in the interval 5-187; sequence SHIRNFSIIA…RLVTTIPAPT (183 aa). GTP is bound by residues 17–22 and 134–137; these read DHGKST and NKID.

Belongs to the TRAFAC class translation factor GTPase superfamily. Classic translation factor GTPase family. LepA subfamily.

Its subcellular location is the cell inner membrane. The enzyme catalyses GTP + H2O = GDP + phosphate + H(+). Its function is as follows. Required for accurate and efficient protein synthesis under certain stress conditions. May act as a fidelity factor of the translation reaction, by catalyzing a one-codon backward translocation of tRNAs on improperly translocated ribosomes. Back-translocation proceeds from a post-translocation (POST) complex to a pre-translocation (PRE) complex, thus giving elongation factor G a second chance to translocate the tRNAs correctly. Binds to ribosomes in a GTP-dependent manner. This Pseudomonas fluorescens (strain ATCC BAA-477 / NRRL B-23932 / Pf-5) protein is Elongation factor 4.